The following is a 304-amino-acid chain: Bacteriochlorophyll synthase 33 kDa chain (304 aa).

9 helical membrane passes run 26–46 (VTWF…NVPI), 51–71 (GVVV…SQAA), 94–114 (IPGL…LVVG), 117–137 (LGSW…AYSV), 151–171 (GLVG…VLLA), 178–198 (GFPI…IMTI), 227–247 (IACT…YLFS), 250–270 (YHAT…SVWM), and 279–299 (WYNG…AFAI).

It localises to the cell membrane. Its pathway is porphyrin-containing compound metabolism; bacteriochlorophyll biosynthesis (light-independent). In terms of biological role, catalyzes the esterification of bacteriochlorophyllide a by geranylgeraniol-PPi. The protein is Bacteriochlorophyll synthase 33 kDa chain (bchG) of Rhodobacter capsulatus (strain ATCC BAA-309 / NBRC 16581 / SB1003).